The chain runs to 1969 residues: Hybrid signal transduction histidine kinase B (1969 aa).

The segment covering 1–10 (MEKSEQTNSF) has biased composition (polar residues). 5 disordered regions span residues 1-91 (MEKS…HETK), 218-335 (KINE…KTKQ), 412-436 (QQQQQHHRHYHHHINSGGSSGSSDK), 468-505 (NNINIQAPSTPVQSRNYPLFTTQSPKNANSASKSKNKL), and 551-598 (GSGG…YNNN). The span at 11–55 (ESSNNNNNNIDSNINNNLENNNNKNNNNNNNNNNNNNNNNNNIEN) shows a compositional bias: low complexity. Residues 56–65 (SIDKNNKEDN) show a composition bias toward basic and acidic residues. A compositionally biased stretch (basic residues) spans 72–86 (SHRKHRTRLKSKKGN). Over residues 242–252 (TNSSILKSSEQ) the composition is skewed to polar residues. Residues 280-292 (SSSSDEGSDNSKS) show a composition bias toward low complexity. Residues 293 to 304 (QHSSVNTPTLSR) show a composition bias toward polar residues. The segment covering 313 to 335 (SQQSQKQSQQQSQQPQQQNKTKQ) has biased composition (low complexity). Positions 416–425 (QHHRHYHHHI) are enriched in basic residues. Over residues 469-492 (NINIQAPSTPVQSRNYPLFTTQSP) the composition is skewed to polar residues. The segment covering 551-571 (GSGGGGSGGGGGGGGGGGGIG) has biased composition (gly residues). The segment covering 574–598 (SSFLDDNNNLNNGENFKNSNSYNNN) has biased composition (low complexity). The next 5 membrane-spanning stretches (helical) occupy residues 660 to 680 (AYILNFLNLVLFVVYLLSTIL), 684 to 704 (EWFIFAPGILLSVIYFFLGKI), 708 to 728 (MYLIAFLTISTAVAINITSII), 747 to 767 (LVMIMVPLLFPSIVYSIVILI), and 795 to 815 (FGELLRSIIIVFVILMFYTIL). One can recognise a Histidine kinase domain in the interval 967–1188 (TVSHELRTPI…TFSFTIPCGI (222 aa)). Position 970 is a phosphohistidine; by autocatalysis (His-970). Disordered stretches follow at residues 1359-1415 (ASKD…HQLI), 1521-1563 (GIAL…TTQS), 1617-1709 (NNNF…SSHS), and 1755-1832 (QKPQ…TAAA). Gly residues predominate over residues 1373-1398 (GDGGRSLSGGGGGVGSNGNGNGGGGL). 2 stretches are compositionally biased toward low complexity: residues 1399–1410 (DSNISPSELSSS) and 1527–1549 (SSSKSPSIPSSSSASASALSPNS). Polar residues-rich tracts occupy residues 1554–1563 (ELGNGKTTQS) and 1626–1665 (KPSTPTFLSNQPSPATSNSPQLLQSPTTSTTGSINLSPHR). Composition is skewed to low complexity over residues 1755–1774 (QKPQQQQQKPTTTTTTTSTQ) and 1781–1821 (KTTT…TTTT). Residues 1840 to 1967 (KILLVEDNFV…DILIQMIKKH (128 aa)) enclose the Response regulatory domain. Asp-1889 carries the post-translational modification 4-aspartylphosphate.

The protein resides in the membrane. The catalysed reaction is ATP + protein L-histidine = ADP + protein N-phospho-L-histidine.. Acts in the cytokinin signal transduction pathway that regulates spore germination. Required for the maintenance of spore dormancy. Does not appear to act as a cytokinin receptor. Probably undergoes ATP-dependent autophosphorylation at a conserved histidine residue in the kinase core, which is followed by transfer of the phosphoryl group to a conserved aspartate residue in the receiver domain. The sequence is that of Hybrid signal transduction histidine kinase B (dhkB) from Dictyostelium discoideum (Social amoeba).